The primary structure comprises 345 residues: Phosphoribosylformylglycinamidine cyclo-ligase (345 aa).

The protein belongs to the AIR synthase family.

It localises to the cytoplasm. The catalysed reaction is 2-formamido-N(1)-(5-O-phospho-beta-D-ribosyl)acetamidine + ATP = 5-amino-1-(5-phospho-beta-D-ribosyl)imidazole + ADP + phosphate + H(+). It participates in purine metabolism; IMP biosynthesis via de novo pathway; 5-amino-1-(5-phospho-D-ribosyl)imidazole from N(2)-formyl-N(1)-(5-phospho-D-ribosyl)glycinamide: step 2/2. In Shigella dysenteriae serotype 1 (strain Sd197), this protein is Phosphoribosylformylglycinamidine cyclo-ligase.